The sequence spans 103 residues: Major carboxysome shell protein CsoS1 (103 aa).

A BMC domain is found at 9 to 94 (ALGMIETRGL…PHREVEPALG (86 aa)).

It belongs to the bacterial microcompartments protein family. CsoS1 subfamily. In terms of assembly, homohexamer with a small central pore. A CsoS1-CsoS1D-CsoS2 complex can be isolated following expression in E.coli. Forms a CsoS2-CsoS1-RuBisCO complex.

The protein resides in the carboxysome. Its function is as follows. The major shell protein of the carboxysome, a polyhedral inclusion where RuBisCO (ribulose bisphosphate carboxylase, ccbL-ccbS) is sequestered. Assembles into hexamers which make sheets that form the facets of the polyhedral carboxysome. There are estimated to be 538 CsoS1 hexamers per carboxysome; note this number includes the probable carboxysome shell vertex proteins CsoS4A and CsoS4B. The protein is Major carboxysome shell protein CsoS1 of Prochlorococcus marinus subsp. pastoris (strain CCMP1986 / NIES-2087 / MED4).